The chain runs to 444 residues: Zinc finger CCCH domain-containing protein 63 (444 aa).

C3H1-type zinc fingers lie at residues 56-84 (RIGE…HPAD), 101-129 (RIGQ…HPRE), and 147-175 (RPNE…HPQP). The disordered stretch occupies residues 251 to 276 (GSSSSDDQQRTAGGAQYYTGSRHSET). 2 consecutive C3H1-type zinc fingers follow at residues 309-337 (RPDQ…HPKE) and 355-383 (RPGE…HPMG). The tract at residues 405–444 (PVPAHSEVSPDNVSGRSRRITHSDSQQIPSGERGTEREAS) is disordered.

The protein is Zinc finger CCCH domain-containing protein 63 of Oryza sativa subsp. japonica (Rice).